The sequence spans 402 residues: UPF0261 protein BPP1817 (402 aa).

The protein belongs to the UPF0261 family.

The chain is UPF0261 protein BPP1817 from Bordetella parapertussis (strain 12822 / ATCC BAA-587 / NCTC 13253).